The primary structure comprises 860 residues: Leucine--tRNA ligase (860 aa).

The short motif at P42–H52 is the 'HIGH' region element. Positions K619–S623 match the 'KMSKS' region motif. Residue K622 participates in ATP binding.

It belongs to the class-I aminoacyl-tRNA synthetase family.

The protein localises to the cytoplasm. It catalyses the reaction tRNA(Leu) + L-leucine + ATP = L-leucyl-tRNA(Leu) + AMP + diphosphate. The chain is Leucine--tRNA ligase from Photorhabdus laumondii subsp. laumondii (strain DSM 15139 / CIP 105565 / TT01) (Photorhabdus luminescens subsp. laumondii).